Consider the following 54-residue polypeptide: Ribulose bisphosphate carboxylase large chain (54 aa).

Positions 1–2 (MS) are excised as a propeptide. Pro-3 carries the N-acetylproline modification. At Lys-14 the chain carries N6,N6,N6-trimethyllysine.

It belongs to the RuBisCO large chain family. Type I subfamily. Heterohexadecamer of 8 large chains and 8 small chains.

The protein localises to the plastid. Its subcellular location is the chloroplast. It carries out the reaction 2 (2R)-3-phosphoglycerate + 2 H(+) = D-ribulose 1,5-bisphosphate + CO2 + H2O. It catalyses the reaction D-ribulose 1,5-bisphosphate + O2 = 2-phosphoglycolate + (2R)-3-phosphoglycerate + 2 H(+). In terms of biological role, ruBisCO catalyzes two reactions: the carboxylation of D-ribulose 1,5-bisphosphate, the primary event in carbon dioxide fixation, as well as the oxidative fragmentation of the pentose substrate in the photorespiration process. Both reactions occur simultaneously and in competition at the same active site. The sequence is that of Ribulose bisphosphate carboxylase large chain (rbcL) from Geum borisii (Avens).